The primary structure comprises 550 residues: Chaperonin GroEL (550 aa).

ATP contacts are provided by residues T30–P33, K51, D87–T91, G415, and D496.

It belongs to the chaperonin (HSP60) family. In terms of assembly, forms a cylinder of 14 subunits composed of two heptameric rings stacked back-to-back. Interacts with the co-chaperonin GroES.

The protein localises to the cytoplasm. It catalyses the reaction ATP + H2O + a folded polypeptide = ADP + phosphate + an unfolded polypeptide.. Together with its co-chaperonin GroES, plays an essential role in assisting protein folding. The GroEL-GroES system forms a nano-cage that allows encapsulation of the non-native substrate proteins and provides a physical environment optimized to promote and accelerate protein folding. The sequence is that of Chaperonin GroEL from Rickettsia prowazekii (strain Madrid E).